Here is a 259-residue protein sequence, read N- to C-terminus: Uridylate kinase (259 aa).

Residue Lys-21–Gly-24 participates in ATP binding. Position 63 (Gly-63) interacts with UMP. Gly-64 and Arg-68 together coordinate ATP. UMP-binding positions include Asp-83 and Thr-144–Thr-151. Residues Thr-171, Phe-177, and Asp-180 each coordinate ATP.

The protein belongs to the UMP kinase family. As to quaternary structure, homohexamer.

Its subcellular location is the cytoplasm. It catalyses the reaction UMP + ATP = UDP + ADP. The protein operates within pyrimidine metabolism; CTP biosynthesis via de novo pathway; UDP from UMP (UMPK route): step 1/1. Inhibited by UTP. Catalyzes the reversible phosphorylation of UMP to UDP. The chain is Uridylate kinase from Salinibacter ruber (strain DSM 13855 / M31).